The chain runs to 411 residues: MFLSLFCVIIVAVGCSSKDGNVKLEFVQAMWRHGERSALADLYPIYEKDWVFGGGGLGELTGRGMGEMNNLGRLIRERYVRKFNFLEPKYASKEVYFRSTNLNRTIISAMSLLYGLFPPSLYDIPNVDYPFTPLKWLPGLAFVPVHVDGSDQCAASQNCPCPRYDFLQQQMLTLPEVQQAFQQVILLNRQIAPLYNVTTGVDTFYVYPDTWKCQRAYFNKTMYDKLPWYNEQLYSKAEITYAPIKGFLEGSFSQPAVTSNGLDVAFEIQQVRSGVMINEIVSRASEKLNCVERGQNCTSYLNKLKFYGYSIHDNNVYAVLVALGIPHISATEDGWPSYAAAIFFEFYRNSQTNKRLFKVLYRQDASSQITDVTSQVPMCQGVSMCPLSTFQHLADVLKPIPDINTVCNITS.

The Nucleophile role is filled by histidine 33. The Proton donor role is filled by aspartate 313. Cysteine 379 and cysteine 385 are oxidised to a cystine.

It belongs to the histidine acid phosphatase family.

The catalysed reaction is a phosphate monoester + H2O = an alcohol + phosphate. This is Putative acid phosphatase 10 (pho-10) from Caenorhabditis elegans.